A 330-amino-acid polypeptide reads, in one-letter code: Glycerol-3-phosphate dehydrogenase [NAD(P)+] (330 aa).

Residues tryptophan 11, arginine 33, and lysine 105 each coordinate NADPH. Sn-glycerol 3-phosphate-binding residues include lysine 105, glycine 133, and serine 135. An NADPH-binding site is contributed by alanine 137. Sn-glycerol 3-phosphate contacts are provided by lysine 188, aspartate 241, serine 251, arginine 252, and asparagine 253. Lysine 188 serves as the catalytic Proton acceptor. Residue arginine 252 participates in NADPH binding. NADPH-binding residues include valine 276 and glutamate 278.

It belongs to the NAD-dependent glycerol-3-phosphate dehydrogenase family.

It localises to the cytoplasm. The enzyme catalyses sn-glycerol 3-phosphate + NAD(+) = dihydroxyacetone phosphate + NADH + H(+). The catalysed reaction is sn-glycerol 3-phosphate + NADP(+) = dihydroxyacetone phosphate + NADPH + H(+). The protein operates within membrane lipid metabolism; glycerophospholipid metabolism. In terms of biological role, catalyzes the reduction of the glycolytic intermediate dihydroxyacetone phosphate (DHAP) to sn-glycerol 3-phosphate (G3P), the key precursor for phospholipid synthesis. This chain is Glycerol-3-phosphate dehydrogenase [NAD(P)+], found in Acidovorax ebreus (strain TPSY) (Diaphorobacter sp. (strain TPSY)).